A 305-amino-acid chain; its full sequence is Methionyl-tRNA formyltransferase (305 aa).

111–114 contributes to the (6S)-5,6,7,8-tetrahydrofolate binding site; the sequence is SLLP.

The protein belongs to the Fmt family.

The enzyme catalyses L-methionyl-tRNA(fMet) + (6R)-10-formyltetrahydrofolate = N-formyl-L-methionyl-tRNA(fMet) + (6S)-5,6,7,8-tetrahydrofolate + H(+). Its function is as follows. Attaches a formyl group to the free amino group of methionyl-tRNA(fMet). The formyl group appears to play a dual role in the initiator identity of N-formylmethionyl-tRNA by promoting its recognition by IF2 and preventing the misappropriation of this tRNA by the elongation apparatus. This is Methionyl-tRNA formyltransferase from Campylobacter jejuni (strain RM1221).